We begin with the raw amino-acid sequence, 267 residues long: Cell division protein FtsQ (267 aa).

Topologically, residues 1–32 (MRKKTSSNKKKQTKKTNNISLRRKLGLMYKKA) are cytoplasmic. The helical transmembrane segment at 33–53 (ILGLKIALIIFVCLFVFTKYF) threads the bilayer. The Periplasmic segment spans residues 54–267 (AGIKTYLTTN…DKNKYYIEKY (214 aa)). One can recognise a POTRA domain in the interval 73 to 141 (FKLENVIIEG…NTVYIKLFER (69 aa)).

It belongs to the FtsQ/DivIB family. FtsQ subfamily.

The protein localises to the cell inner membrane. Functionally, essential cell division protein. The chain is Cell division protein FtsQ from Rickettsia conorii (strain ATCC VR-613 / Malish 7).